The primary structure comprises 215 residues: Short neuropeptide F (215 aa).

The signal sequence occupies residues 1–22 (MCRINFTTLSLILVLWSGSLMS). A propeptide spanning residues 23 to 56 (EPSQNADGSIKGLYEYLLQREYAAPVSYADHQIK) is cleaved from the precursor. A phenylalanine amide mark is found at Phe69 and Phe101. At Trp129 the chain carries Tryptophan amide. Phenylalanine amide is present on Phe157. Residues 160–215 (SDPSWAMFNEHQLDEQQFADATRQPSKTLRGDEPTSIESTEQVESEENSPSNMDEK) constitute a propeptide that is removed on maturation. The tract at residues 173–215 (DEQQFADATRQPSKTLRGDEPTSIESTEQVESEENSPSNMDEK) is disordered.

It belongs to the NPY family.

The protein resides in the secreted. Its function is as follows. Plays a role in controlling food intake and regulating body size. The sequence is that of Short neuropeptide F from Aedes aegypti (Yellowfever mosquito).